Consider the following 387-residue polypeptide: Pepsin II-2/3 (387 aa).

An N-terminal signal peptide occupies residues 1-15 (MKWLLLLGLLALSEC). Residues 16–59 (IVHKVPLVRKKSLRKNLIEKGLLQDYLKTHTPNPATKYFPKETF) constitute a propeptide, activation peptide. The Peptidase A1 domain occupies 75-384 (YFGTISIGTP…DRANNQLGLA (310 aa)). Residue D93 is part of the active site. An intrachain disulfide couples C106 to C111. A Phosphoserine modification is found at S129. Residues C267 and C271 are joined by a disulfide bond. D276 is an active-site residue. A disulfide bridge connects residues C310 and C343.

This sequence belongs to the peptidase A1 family.

Its subcellular location is the secreted. The catalysed reaction is Preferential cleavage: hydrophobic, preferably aromatic, residues in P1 and P1' positions. Cleaves 1-Phe-|-Val-2, 4-Gln-|-His-5, 13-Glu-|-Ala-14, 14-Ala-|-Leu-15, 15-Leu-|-Tyr-16, 16-Tyr-|-Leu-17, 23-Gly-|-Phe-24, 24-Phe-|-Phe-25 and 25-Phe-|-Tyr-26 bonds in the B chain of insulin.. Functionally, shows particularly broad specificity; although bonds involving phenylalanine and leucine are preferred, many others are also cleaved to some extent. The protein is Pepsin II-2/3 of Oryctolagus cuniculus (Rabbit).